A 213-amino-acid polypeptide reads, in one-letter code: Peptidyl-tRNA hydrolase (213 aa).

TRNA is bound at residue Y26. The Proton acceptor role is filled by H31. The tRNA site is built by Y78, N80, and N126.

Belongs to the PTH family. Monomer.

It localises to the cytoplasm. It catalyses the reaction an N-acyl-L-alpha-aminoacyl-tRNA + H2O = an N-acyl-L-amino acid + a tRNA + H(+). Its function is as follows. Hydrolyzes ribosome-free peptidyl-tRNAs (with 1 or more amino acids incorporated), which drop off the ribosome during protein synthesis, or as a result of ribosome stalling. Functionally, catalyzes the release of premature peptidyl moieties from peptidyl-tRNA molecules trapped in stalled 50S ribosomal subunits, and thus maintains levels of free tRNAs and 50S ribosomes. In Trichormus variabilis (strain ATCC 29413 / PCC 7937) (Anabaena variabilis), this protein is Peptidyl-tRNA hydrolase.